The sequence spans 334 residues: Aromatic O-demethylase, reductase subunit (334 aa).

The region spanning 1–91 is the 2Fe-2S ferredoxin-type domain; that stretch reads MTFAVSVGGR…DTEVRSTADA (91 aa). Residues C35, C40, C43, and C75 each contribute to the [2Fe-2S] cluster site. The FAD-binding FR-type domain maps to 98–198; sequence LRDLTATVLE…TGPLGDFHLP (101 aa). FAD contacts are provided by residues 145–148, 162–164, 170–172, T215, F330, and S334; these read RQYS, HVR, and VAT.

Monomer. Forms a heterodimer with GcoA. The cofactor is FAD. Requires [2Fe-2S] cluster as cofactor.

The enzyme catalyses 2 oxidized [cytochrome P450] + NADH = 2 reduced [cytochrome P450] + NAD(+) + H(+). The protein operates within aromatic compound metabolism. Its function is as follows. Part of a two-component P450 system that efficiently O-demethylates diverse aromatic substrates such as guaiacol and a wide variety of lignin-derived monomers. Is likely involved in lignin degradation, allowing Amycolatopsis sp. ATCC 39116 to catabolize plant biomass. GcoB transfers electrons from NADH to the cytochrome P450 subunit GcoA. Highly prefers NADH over NADPH as the electron donor. The polypeptide is Aromatic O-demethylase, reductase subunit (Amycolatopsis sp. (strain ATCC 39116 / 75iv2)).